Consider the following 336-residue polypeptide: Probable RNA methyltransferase Anae109_4379 (336 aa).

Glutamate 86 acts as the Proton acceptor in catalysis. The 230-residue stretch at 93 to 322 (FDTHHTVCLS…PIVRRYSGGQ (230 aa)) folds into the Radical SAM core domain. An intrachain disulfide couples cysteine 100 to cysteine 328. Residues cysteine 107, cysteine 111, and cysteine 114 each contribute to the [4Fe-4S] cluster site. S-adenosyl-L-methionine contacts are provided by residues 154–155 (GE), serine 186, and 209–211 (SLN). The S-methylcysteine intermediate role is filled by cysteine 328.

It belongs to the radical SAM superfamily. RlmN family. [4Fe-4S] cluster is required as a cofactor.

Its subcellular location is the cytoplasm. In Anaeromyxobacter sp. (strain Fw109-5), this protein is Probable RNA methyltransferase Anae109_4379.